The following is a 601-amino-acid chain: Elongation factor 4 (601 aa).

Residues 5-187 (SNIRNFAIIA…AIVTKLPSPN (183 aa)) enclose the tr-type G domain. GTP-binding positions include 17-22 (DHGKST) and 134-137 (NKID).

It belongs to the TRAFAC class translation factor GTPase superfamily. Classic translation factor GTPase family. LepA subfamily.

The protein resides in the cell inner membrane. It carries out the reaction GTP + H2O = GDP + phosphate + H(+). Functionally, required for accurate and efficient protein synthesis under certain stress conditions. May act as a fidelity factor of the translation reaction, by catalyzing a one-codon backward translocation of tRNAs on improperly translocated ribosomes. Back-translocation proceeds from a post-translocation (POST) complex to a pre-translocation (PRE) complex, thus giving elongation factor G a second chance to translocate the tRNAs correctly. Binds to ribosomes in a GTP-dependent manner. This is Elongation factor 4 from Orientia tsutsugamushi (strain Ikeda) (Rickettsia tsutsugamushi).